The primary structure comprises 194 residues: Inner membrane-spanning protein YciB (194 aa).

A run of 5 helical transmembrane segments spans residues 3-23, 47-67, 76-96, 119-139, and 149-169; these read LFIEYFPLLIFFIINSIAGIY, IPAKQWIIFGLIVVFGGLTIY, WKVTIINAFFAAALLVSNTFF, LNLAWALFFLFCSGLNYYIAF, and FKVFGLTGLMFLFSITSILFL.

It belongs to the YciB family.

The protein resides in the cell inner membrane. Plays a role in cell envelope biogenesis, maintenance of cell envelope integrity and membrane homeostasis. The protein is Inner membrane-spanning protein YciB of Colwellia psychrerythraea (strain 34H / ATCC BAA-681) (Vibrio psychroerythus).